The sequence spans 202 residues: MPPKKKGIGGSKKEKTKKSTPEKDDGLTEKYRRSVLDVSVLKEHLALRSGVARQATAVRDELKSQVRDLEQLLSQERSDMKDITADLNRQYKSMETDLQSKADKLEASVDLLEKQLAECQVELKSERELRENTEAEKDAIISDLQSKLDSMERECEKILHGCLDSLLSHLADTRMKWEEQSTVIHQDVKDMLREFGINPLHM.

The segment at 1–29 (MPPKKKGIGGSKKEKTKKSTPEKDDGLTE) is disordered. The segment covering 11 to 29 (SKKEKTKKSTPEKDDGLTE) has biased composition (basic and acidic residues). The stretch at 50-161 (GVARQATAVR…ERECEKILHG (112 aa)) forms a coiled coil.

The protein belongs to the DRC12 family. In terms of assembly, component of the nexin-dynein regulatory complex (N-DRC).

The protein localises to the cytoplasm. It is found in the cytoskeleton. It localises to the flagellum axoneme. Its function is as follows. Component of the nexin-dynein regulatory complex (N-DRC), a key regulator of ciliary/flagellar motility which maintains the alignment and integrity of the distal axoneme and regulates microtubule sliding in motile axonemes. This Danio rerio (Zebrafish) protein is Dynein regulatory complex protein 12 (drc12).